Consider the following 119-residue polypeptide: Ethylene-responsive proteinase inhibitor 1 (119 aa).

A signal peptide spans 1-27; it reads MEANKSMVKLVAFLIILVSSCFQSLTA. Positions 28-48 are excised as a propeptide; that stretch reads QDLEIEVSDGLNVLQVHDVSQ.

It belongs to the protease inhibitor I13 (potato type I serine protease inhibitor) family.

The protein localises to the secreted. The protein is Ethylene-responsive proteinase inhibitor 1 of Solanum lycopersicum (Tomato).